We begin with the raw amino-acid sequence, 507 residues long: Maturase K (507 aa).

This sequence belongs to the intron maturase 2 family. MatK subfamily.

It is found in the plastid. Its subcellular location is the chloroplast. Functionally, usually encoded in the trnK tRNA gene intron. Probably assists in splicing its own and other chloroplast group II introns. This Liriodendron tulipifera (Tuliptree) protein is Maturase K.